We begin with the raw amino-acid sequence, 716 residues long: Translation initiation factor IF-2 (716 aa).

The segment at 53–135 (GGAGVTSQKP…PLKPKKELPE (83 aa)) is disordered. A compositionally biased stretch (polar residues) spans 57–83 (VTSQKPAETNKNKPQGINQQPAGNQPN). Low complexity predominate over residues 93–109 (VQNNQFNKNKKNNNNNK). Residues 217 to 386 (IRPPVVTIMG…LLVSEVEELK (170 aa)) form the tr-type G domain. Residues 226–233 (GHVDHGKT) form a G1 region. 226 to 233 (GHVDHGKT) contributes to the GTP binding site. Residues 251 to 255 (GITQH) form a G2 region. A G3 region spans residues 272–275 (DTPG). GTP is bound by residues 272-276 (DTPGH) and 326-329 (NKVD). The interval 326-329 (NKVD) is G4. The tract at residues 362 to 364 (SAL) is G5.

Belongs to the TRAFAC class translation factor GTPase superfamily. Classic translation factor GTPase family. IF-2 subfamily.

The protein localises to the cytoplasm. One of the essential components for the initiation of protein synthesis. Protects formylmethionyl-tRNA from spontaneous hydrolysis and promotes its binding to the 30S ribosomal subunits. Also involved in the hydrolysis of GTP during the formation of the 70S ribosomal complex. This Bacillus velezensis (strain DSM 23117 / BGSC 10A6 / LMG 26770 / FZB42) (Bacillus amyloliquefaciens subsp. plantarum) protein is Translation initiation factor IF-2.